The following is a 609-amino-acid chain: Protein kinase PVPK-1 (609 aa).

Polar residues predominate over residues Met-1–Ser-19. Disordered stretches follow at residues Met-1–Thr-51 and Pro-80–Gly-100. The 337-residue stretch at Phe-229 to Phe-565 folds into the Protein kinase domain. ATP is bound by residues Leu-235–Val-243 and Lys-258. Asp-354 acts as the Proton acceptor in catalysis. The tract at residues Gly-429–Thr-448 is disordered.

This sequence belongs to the protein kinase superfamily. Ser/Thr protein kinase family.

It carries out the reaction L-seryl-[protein] + ATP = O-phospho-L-seryl-[protein] + ADP + H(+). It catalyses the reaction L-threonyl-[protein] + ATP = O-phospho-L-threonyl-[protein] + ADP + H(+). The polypeptide is Protein kinase PVPK-1 (Phaseolus vulgaris (Kidney bean)).